Reading from the N-terminus, the 473-residue chain is tRNA-2-methylthio-N(6)-dimethylallyladenosine synthase (473 aa).

One can recognise an MTTase N-terminal domain in the interval 3–120 (MKLHVKTWGC…LPEMIKEVQE (118 aa)). Residues C12, C49, C83, C157, C161, and C164 each contribute to the [4Fe-4S] cluster site. In terms of domain architecture, Radical SAM core spans 143–375 (KADGATAFVS…QDRIQQQSQG (233 aa)). The TRAM domain occupies 378 to 441 (RKMVGSVQRI…TNSIRGKFIR (64 aa)).

It belongs to the methylthiotransferase family. MiaB subfamily. As to quaternary structure, monomer. [4Fe-4S] cluster is required as a cofactor.

It is found in the cytoplasm. It carries out the reaction N(6)-dimethylallyladenosine(37) in tRNA + (sulfur carrier)-SH + AH2 + 2 S-adenosyl-L-methionine = 2-methylsulfanyl-N(6)-dimethylallyladenosine(37) in tRNA + (sulfur carrier)-H + 5'-deoxyadenosine + L-methionine + A + S-adenosyl-L-homocysteine + 2 H(+). In terms of biological role, catalyzes the methylthiolation of N6-(dimethylallyl)adenosine (i(6)A), leading to the formation of 2-methylthio-N6-(dimethylallyl)adenosine (ms(2)i(6)A) at position 37 in tRNAs that read codons beginning with uridine. This is tRNA-2-methylthio-N(6)-dimethylallyladenosine synthase from Psychromonas ingrahamii (strain DSM 17664 / CCUG 51855 / 37).